The primary structure comprises 371 residues: Dual-specificity RNA methyltransferase RlmN (371 aa).

The active-site Proton acceptor is the Glu-86. A Radical SAM core domain is found at 105 to 338 (RHARYTICVS…CTIRQSKGLD (234 aa)). An intrachain disulfide couples Cys-112 to Cys-343. [4Fe-4S] cluster contacts are provided by Cys-119, Cys-123, and Cys-126. S-adenosyl-L-methionine-binding positions include 169 to 170 (GE), Ser-201, 224 to 226 (SLH), and Asn-300. Cys-343 (S-methylcysteine intermediate) is an active-site residue. Residues 348–363 (QRSQNLSPSNNNTSKP) are compositionally biased toward polar residues. Residues 348 to 371 (QRSQNLSPSNNNTSKPSDIKKSES) are disordered.

This sequence belongs to the radical SAM superfamily. RlmN family. The cofactor is [4Fe-4S] cluster.

It localises to the cytoplasm. The catalysed reaction is adenosine(2503) in 23S rRNA + 2 reduced [2Fe-2S]-[ferredoxin] + 2 S-adenosyl-L-methionine = 2-methyladenosine(2503) in 23S rRNA + 5'-deoxyadenosine + L-methionine + 2 oxidized [2Fe-2S]-[ferredoxin] + S-adenosyl-L-homocysteine. It carries out the reaction adenosine(37) in tRNA + 2 reduced [2Fe-2S]-[ferredoxin] + 2 S-adenosyl-L-methionine = 2-methyladenosine(37) in tRNA + 5'-deoxyadenosine + L-methionine + 2 oxidized [2Fe-2S]-[ferredoxin] + S-adenosyl-L-homocysteine. In terms of biological role, specifically methylates position 2 of adenine 2503 in 23S rRNA and position 2 of adenine 37 in tRNAs. m2A2503 modification seems to play a crucial role in the proofreading step occurring at the peptidyl transferase center and thus would serve to optimize ribosomal fidelity. The polypeptide is Dual-specificity RNA methyltransferase RlmN (Campylobacter curvus (strain 525.92)).